A 307-amino-acid polypeptide reads, in one-letter code: Lipid droplet-associated hydrolase (307 aa).

The active-site Nucleophile is S119. The segment at 157 to 200 (GWVFTKVAMPLYSVFGYIFFSFFNFLPVWLRLMLIQIYFLIFSI) is potential amphipathic helix required for binding to lipid droplets. 2 helical membrane-spanning segments follow: residues 166–186 (PLYSVFGYIFFSFFNFLPVWL) and 188–208 (LMLIQIYFLIFSIPRQFLGTA). Active-site charge relay system residues include D254 and H283.

It belongs to the AB hydrolase superfamily. LDAH family. In terms of assembly, interacts with the juvenile hormone hydrolase enzymes Jheh1 and Jheh2. Also interacts with Hmu, Cpr, Gp93 and Pvr. Expressed in accessory glands.

The protein localises to the lipid droplet. It is found in the endoplasmic reticulum membrane. The catalysed reaction is a cholesterol ester + H2O = cholesterol + a fatty acid + H(+). Probable serine lipid hydrolase associated with lipid droplets. Appears to lack or have very low cholesterol esterase activity. Appears to lack triglyceride lipase activity. Involved in cholesterol and triglyceride homeostasis; stimulates cellular triglyceride accumulation and cellular cholesterol release. Involved in negatively regulating juvenile hormone (JH) and possibly, insulin signaling activities such as triacylglycerols (TAG) storage, and thereby plays a role in the endocrine regulation of organismal growth and survival. Likely functions by enhancing the activity of the JH hydrolase enzymes Jheh1 and Jheh2. Required for lipid droplet positioning and fat storage. This is Lipid droplet-associated hydrolase from Drosophila melanogaster (Fruit fly).